We begin with the raw amino-acid sequence, 415 residues long: UDP-N-acetylmuramoylalanine--D-glutamate ligase (415 aa).

91–97 (GTDGKST) contributes to the ATP binding site.

The protein belongs to the MurCDEF family.

It localises to the cytoplasm. It catalyses the reaction UDP-N-acetyl-alpha-D-muramoyl-L-alanine + D-glutamate + ATP = UDP-N-acetyl-alpha-D-muramoyl-L-alanyl-D-glutamate + ADP + phosphate + H(+). It functions in the pathway cell wall biogenesis; peptidoglycan biosynthesis. Cell wall formation. Catalyzes the addition of glutamate to the nucleotide precursor UDP-N-acetylmuramoyl-L-alanine (UMA). This chain is UDP-N-acetylmuramoylalanine--D-glutamate ligase, found in Aquifex aeolicus (strain VF5).